The sequence spans 45 residues: Pollen allergen Amb a 5 (45 aa).

Disulfide bonds link Cys-4–Cys-39, Cys-11–Cys-26, Cys-18–Cys-32, and Cys-19–Cys-43.

Monomer.

This chain is Pollen allergen Amb a 5, found in Ambrosia artemisiifolia var. elatior (Short ragweed).